The following is a 392-amino-acid chain: Formate-dependent phosphoribosylglycinamide formyltransferase (392 aa).

Residues 22 to 23 (EL) and Glu-82 contribute to the N(1)-(5-phospho-beta-D-ribosyl)glycinamide site. Residues Arg-114, Lys-155, 160–165 (SSGKGQ), 195–198 (EGVV), and Glu-203 contribute to the ATP site. The 190-residue stretch at 119-308 (RLAAEELQLP…EFALHVRAFL (190 aa)) folds into the ATP-grasp domain. Mg(2+) is bound by residues Glu-267 and Glu-279. N(1)-(5-phospho-beta-D-ribosyl)glycinamide contacts are provided by residues Asp-286, Lys-355, and 362-363 (RR).

It belongs to the PurK/PurT family. In terms of assembly, homodimer.

The catalysed reaction is N(1)-(5-phospho-beta-D-ribosyl)glycinamide + formate + ATP = N(2)-formyl-N(1)-(5-phospho-beta-D-ribosyl)glycinamide + ADP + phosphate + H(+). Its pathway is purine metabolism; IMP biosynthesis via de novo pathway; N(2)-formyl-N(1)-(5-phospho-D-ribosyl)glycinamide from N(1)-(5-phospho-D-ribosyl)glycinamide (formate route): step 1/1. Its function is as follows. Involved in the de novo purine biosynthesis. Catalyzes the transfer of formate to 5-phospho-ribosyl-glycinamide (GAR), producing 5-phospho-ribosyl-N-formylglycinamide (FGAR). Formate is provided by PurU via hydrolysis of 10-formyl-tetrahydrofolate. The polypeptide is Formate-dependent phosphoribosylglycinamide formyltransferase (Shigella dysenteriae serotype 1 (strain Sd197)).